The sequence spans 510 residues: Ectonucleoside triphosphate diphosphohydrolase 1 (510 aa).

Over 1-16 (MEDIKDSKVKRFCSKN) the chain is Cytoplasmic. A helical membrane pass occupies residues 17 to 37 (ILIILGFTSILAVIALIAVGL). Residues 38–478 (TQNKPLPENV…SPPLPHSTYI (441 aa)) lie on the Extracellular side of the membrane. An N-linked (GlcNAc...) asparagine glycan is attached at N73. C84 and C108 form a disulfide bridge. E174 (proton acceptor) is an active-site residue. N226, N291, and N333 each carry an N-linked (GlcNAc...) asparagine glycan. Intrachain disulfides connect C254/C300 and C281/C324. 2 disulfide bridges follow: C337–C342 and C391–C414. Residues N428 and N457 are each glycosylated (N-linked (GlcNAc...) asparagine). The helical transmembrane segment at 479 to 499 (GLMVLFSLLLVAVAITGLFIY) threads the bilayer. The Cytoplasmic portion of the chain corresponds to 500–510 (SKPSYFWKEAV).

This sequence belongs to the GDA1/CD39 NTPase family. In terms of assembly, homodimer; disulfide-linked. Ca(2+) serves as cofactor. Mg(2+) is required as a cofactor. Post-translationally, N-glycosylated. In terms of processing, the N-terminus is blocked. Palmitoylated on Cys-13; which is required for caveola targeting.

It localises to the membrane. The protein resides in the caveola. It carries out the reaction a ribonucleoside 5'-triphosphate + 2 H2O = a ribonucleoside 5'-phosphate + 2 phosphate + 2 H(+). The catalysed reaction is a ribonucleoside 5'-triphosphate + H2O = a ribonucleoside 5'-diphosphate + phosphate + H(+). It catalyses the reaction a ribonucleoside 5'-diphosphate + H2O = a ribonucleoside 5'-phosphate + phosphate + H(+). The enzyme catalyses ATP + 2 H2O = AMP + 2 phosphate + 2 H(+). It carries out the reaction ATP + H2O = ADP + phosphate + H(+). The catalysed reaction is ADP + H2O = AMP + phosphate + H(+). It catalyses the reaction CTP + 2 H2O = CMP + 2 phosphate + 2 H(+). The enzyme catalyses CTP + H2O = CDP + phosphate + H(+). It carries out the reaction CDP + H2O = CMP + phosphate + H(+). The catalysed reaction is GTP + 2 H2O = GMP + 2 phosphate + 2 H(+). It catalyses the reaction GTP + H2O = GDP + phosphate + H(+). The enzyme catalyses GDP + H2O = GMP + phosphate + H(+). It carries out the reaction ITP + 2 H2O = IMP + 2 phosphate + 2 H(+). The catalysed reaction is ITP + H2O = IDP + phosphate + H(+). It catalyses the reaction IDP + H2O = IMP + phosphate + H(+). The enzyme catalyses UTP + 2 H2O = UMP + 2 phosphate + 2 H(+). It carries out the reaction UTP + H2O = UDP + phosphate + H(+). The catalysed reaction is UDP + H2O = UMP + phosphate + H(+). Catalyzes the hydrolysis of both di- and triphosphate nucleotides (NDPs and NTPs) and hydrolyze NTPs to nucleotide monophosphates (NMPs) in two distinct successive phosphate-releasing steps, with NDPs as intermediates and participates in the regulation of extracellular levels of nucleotides. By hydrolyzing proinflammatory ATP and platelet-activating ADP to AMP, it blocks platelet aggregation and supports blood flow. The polypeptide is Ectonucleoside triphosphate diphosphohydrolase 1 (Mus musculus (Mouse)).